A 193-amino-acid polypeptide reads, in one-letter code: Holliday junction branch migration complex subunit RuvA (193 aa).

The tract at residues 1 to 64 is domain I; sequence MIGRIAGVLL…EDAHLLYGFG (64 aa). The interval 65-139 is domain II; sequence TAEERSTFRE…GKIGADLGAM (75 aa). The interval 139 to 143 is flexible linker; sequence MAGAA. A domain III region spans residues 144–193; that stretch reads SASDHASDILNALLALGYSEKEALAAVKNVPAGTGVSEGIKLALKALSKG.

It belongs to the RuvA family. In terms of assembly, homotetramer. Forms an RuvA(8)-RuvB(12)-Holliday junction (HJ) complex. HJ DNA is sandwiched between 2 RuvA tetramers; dsDNA enters through RuvA and exits via RuvB. An RuvB hexamer assembles on each DNA strand where it exits the tetramer. Each RuvB hexamer is contacted by two RuvA subunits (via domain III) on 2 adjacent RuvB subunits; this complex drives branch migration. In the full resolvosome a probable DNA-RuvA(4)-RuvB(12)-RuvC(2) complex forms which resolves the HJ.

Its subcellular location is the cytoplasm. The RuvA-RuvB-RuvC complex processes Holliday junction (HJ) DNA during genetic recombination and DNA repair, while the RuvA-RuvB complex plays an important role in the rescue of blocked DNA replication forks via replication fork reversal (RFR). RuvA specifically binds to HJ cruciform DNA, conferring on it an open structure. The RuvB hexamer acts as an ATP-dependent pump, pulling dsDNA into and through the RuvAB complex. HJ branch migration allows RuvC to scan DNA until it finds its consensus sequence, where it cleaves and resolves the cruciform DNA. In Paraburkholderia xenovorans (strain LB400), this protein is Holliday junction branch migration complex subunit RuvA.